The sequence spans 687 residues: Protein SDA1 homolog (687 aa).

Phosphoserine occurs at positions 232, 234, and 236. Residues K254–M315 adopt a coiled-coil conformation. Residues L484 to D509 form a disordered region. Residues T490–D509 are compositionally biased toward acidic residues. A Phosphothreonine modification is found at T552. Residues S585, S589, and S595 each carry the phosphoserine modification. The interval K604–F651 is disordered.

The protein belongs to the SDA1 family.

Its subcellular location is the nucleus. The protein resides in the nucleolus. Required for 60S pre-ribosomal subunits export to the cytoplasm. This Mus musculus (Mouse) protein is Protein SDA1 homolog (Sdad1).